The chain runs to 388 residues: Flavin-dependent monooxygenase (388 aa).

Residues 26 to 27 and 45 to 48 each bind FAD; these read PV and YERD. Arginine 54 serves as a coordination point for NADPH. The FAD site is built by aspartate 61, arginine 117, and leucine 139. Substrate-binding residues include glutamine 192 and arginine 213. Residues aspartate 311 and 321-324 each bind FAD; that span reads GQGV.

The protein belongs to the aromatic-ring hydroxylase family. TetX subfamily. In terms of assembly, monomer. It depends on FAD as a cofactor.

The protein resides in the cytoplasm. The enzyme catalyses a tetracycline + NADPH + O2 + H(+) = an 11a-hydroxytetracycline + NADP(+) + H2O. It catalyses the reaction tetracycline + NADPH + O2 + H(+) = 11a-hydroxytetracycline + NADP(+) + H2O. The catalysed reaction is tigecycline + NADPH + O2 + H(+) = 11a-hydroxytigecycline + NADP(+) + H2O. It carries out the reaction oxytetracycline + NADPH + O2 + H(+) = 11a-hydroxy-oxytetracycline + NADP(+) + H2O. With respect to regulation, anhydrotetracycline, a poor substrate, prevents tetracycline degradation in vitro. In terms of biological role, an FAD-requiring monooxygenase active on tetracycline antibiotic derivatives, which leads to their inactivation. Hydroxylates carbon 11a of oxytetracycline and tigecycline. Acts on many tetracycline analogs (chlorotetracycline, demeclocycline, doxycycline, minocycline, oxytetracyclinee), probably by monooxygenization. Tigecycline, a new generation tetracycline antibiotic, is rendered less effective against E.coli by this monooxygenation, is much weaker at inhibiting translation in vitro and binds Mg(2+) considerably less well. Expression in E.coli BW25113 reduces its growth rate about 5%. The reaction probably proceeds by FAD reduction by NADPH and, second, hydroxylation of antibiotic in a ping-pong mechanism. Degrades chlortetracycline, probably by monooxygenation. Slowly oxidizes anhydrotetracycline, the final substrate in tetracycline biosynthesis. In Bacteroides thetaiotaomicron, this protein is Flavin-dependent monooxygenase.